Reading from the N-terminus, the 445-residue chain is Trigger factor (445 aa).

A PPIase FKBP-type domain is found at 162–247 (GDQITMDAVG…VKAVHTAEPT (86 aa)).

This sequence belongs to the FKBP-type PPIase family. Tig subfamily.

The protein resides in the cytoplasm. The catalysed reaction is [protein]-peptidylproline (omega=180) = [protein]-peptidylproline (omega=0). Involved in protein export. Acts as a chaperone by maintaining the newly synthesized protein in an open conformation. Functions as a peptidyl-prolyl cis-trans isomerase. This is Trigger factor from Rickettsia bellii (strain OSU 85-389).